The chain runs to 513 residues: ATP synthase subunit alpha (513 aa).

169–176 provides a ligand contact to ATP; that stretch reads GDRQIGKT.

The protein belongs to the ATPase alpha/beta chains family. As to quaternary structure, F-type ATPases have 2 components, CF(1) - the catalytic core - and CF(0) - the membrane proton channel. CF(1) has five subunits: alpha(3), beta(3), gamma(1), delta(1), epsilon(1). CF(0) has three main subunits: a(1), b(2) and c(9-12). The alpha and beta chains form an alternating ring which encloses part of the gamma chain. CF(1) is attached to CF(0) by a central stalk formed by the gamma and epsilon chains, while a peripheral stalk is formed by the delta and b chains.

It localises to the cell inner membrane. It catalyses the reaction ATP + H2O + 4 H(+)(in) = ADP + phosphate + 5 H(+)(out). Produces ATP from ADP in the presence of a proton gradient across the membrane. The alpha chain is a regulatory subunit. In Shewanella sediminis (strain HAW-EB3), this protein is ATP synthase subunit alpha.